The sequence spans 464 residues: Cysteine--tRNA ligase (464 aa).

Zn(2+) is bound at residue C29. Positions 31 to 41 (ATVQGDPHIGH) match the 'HIGH' region motif. Residues C207, H232, and E236 each contribute to the Zn(2+) site. The short motif at 263–267 (KMSKS) is the 'KMSKS' region element. Position 266 (K266) interacts with ATP.

The protein belongs to the class-I aminoacyl-tRNA synthetase family. As to quaternary structure, monomer. Zn(2+) serves as cofactor.

It is found in the cytoplasm. The enzyme catalyses tRNA(Cys) + L-cysteine + ATP = L-cysteinyl-tRNA(Cys) + AMP + diphosphate. The polypeptide is Cysteine--tRNA ligase (Rhodococcus opacus (strain B4)).